The primary structure comprises 205 residues: Large ribosomal subunit protein uL4 (205 aa).

Residues 43–77 are disordered; sequence RRRSGTASTKGRSDVAGSRAKLFRQKGTGRARRGD. Residues 63 to 73 show a composition bias toward basic residues; it reads KLFRQKGTGRA.

The protein belongs to the universal ribosomal protein uL4 family. As to quaternary structure, part of the 50S ribosomal subunit.

One of the primary rRNA binding proteins, this protein initially binds near the 5'-end of the 23S rRNA. It is important during the early stages of 50S assembly. It makes multiple contacts with different domains of the 23S rRNA in the assembled 50S subunit and ribosome. Its function is as follows. Forms part of the polypeptide exit tunnel. This Desulfosudis oleivorans (strain DSM 6200 / JCM 39069 / Hxd3) (Desulfococcus oleovorans) protein is Large ribosomal subunit protein uL4.